A 248-amino-acid chain; its full sequence is 5'-nucleotidase SurE (248 aa).

Residues D8, D9, S39, and N91 each contribute to the a divalent metal cation site.

Belongs to the SurE nucleotidase family. A divalent metal cation serves as cofactor.

It localises to the cytoplasm. It catalyses the reaction a ribonucleoside 5'-phosphate + H2O = a ribonucleoside + phosphate. Functionally, nucleotidase that shows phosphatase activity on nucleoside 5'-monophosphates. This is 5'-nucleotidase SurE from Pseudoalteromonas atlantica (strain T6c / ATCC BAA-1087).